A 205-amino-acid polypeptide reads, in one-letter code: MTEWLISNQLIDYNCAVKSMEEKIQQIHNNSADELVWLLQHPPLYTAGISATADDIVEKLFPIYKTGRGGKHTYHGPGQRIIYLMLNLKKRNKCDIKLYIRDLSKWIINVLKQFNILGEFREDRIGIWVNHNGVEKKIAAFGIRLRKWVTYHGIALNVFPDLSHYKGIIPCGLQGYGVTSMEELGVKVPLSELDDILKKEFYKIF.

One can recognise a BPL/LPL catalytic domain in the interval 30–205 (NSADELVWLL…ILKKEFYKIF (176 aa)). Substrate-binding positions include 68–75 (RGGKHTYH), 140–142 (AFG), and 153–155 (GIA). Residue cysteine 171 is the Acyl-thioester intermediate of the active site.

This sequence belongs to the LipB family.

Its subcellular location is the cytoplasm. It carries out the reaction octanoyl-[ACP] + L-lysyl-[protein] = N(6)-octanoyl-L-lysyl-[protein] + holo-[ACP] + H(+). Its pathway is protein modification; protein lipoylation via endogenous pathway; protein N(6)-(lipoyl)lysine from octanoyl-[acyl-carrier-protein]: step 1/2. Catalyzes the transfer of endogenously produced octanoic acid from octanoyl-acyl-carrier-protein onto the lipoyl domains of lipoate-dependent enzymes. Lipoyl-ACP can also act as a substrate although octanoyl-ACP is likely to be the physiological substrate. In Wolbachia pipientis wMel, this protein is Octanoyltransferase.